Consider the following 390-residue polypeptide: Probable tRNA sulfurtransferase (390 aa).

Residues 60 to 162 form the THUMP domain; it reads KQIIDDLKEV…YDCAIVYGHK (103 aa). Residues 180–181, 205–206, arginine 264, glycine 286, and glutamine 295 each bind ATP; these read LL and TF.

It belongs to the ThiI family.

It localises to the cytoplasm. The catalysed reaction is [ThiI sulfur-carrier protein]-S-sulfanyl-L-cysteine + a uridine in tRNA + 2 reduced [2Fe-2S]-[ferredoxin] + ATP + H(+) = [ThiI sulfur-carrier protein]-L-cysteine + a 4-thiouridine in tRNA + 2 oxidized [2Fe-2S]-[ferredoxin] + AMP + diphosphate. The enzyme catalyses [ThiS sulfur-carrier protein]-C-terminal Gly-Gly-AMP + S-sulfanyl-L-cysteinyl-[cysteine desulfurase] + AH2 = [ThiS sulfur-carrier protein]-C-terminal-Gly-aminoethanethioate + L-cysteinyl-[cysteine desulfurase] + A + AMP + 2 H(+). The protein operates within cofactor biosynthesis; thiamine diphosphate biosynthesis. Catalyzes the ATP-dependent transfer of a sulfur to tRNA to produce 4-thiouridine in position 8 of tRNAs, which functions as a near-UV photosensor. Also catalyzes the transfer of sulfur to the sulfur carrier protein ThiS, forming ThiS-thiocarboxylate. This is a step in the synthesis of thiazole, in the thiamine biosynthesis pathway. The sulfur is donated as persulfide by IscS. In Ureaplasma parvum serovar 3 (strain ATCC 27815 / 27 / NCTC 11736), this protein is Probable tRNA sulfurtransferase.